The chain runs to 403 residues: Cytoplasmic tRNA 2-thiolation protein 2 (403 aa).

The protein belongs to the CTU2/NCS2 family.

Its subcellular location is the cytoplasm. It functions in the pathway tRNA modification; 5-methoxycarbonylmethyl-2-thiouridine-tRNA biosynthesis. In terms of biological role, plays a central role in 2-thiolation of mcm(5)S(2)U at tRNA wobble positions of tRNA(Lys), tRNA(Glu) and tRNA(Gln). May act by forming a heterodimer with NCS6/CTU1 that ligates sulfur from thiocarboxylated URM1 onto the uridine of tRNAs at wobble position. The polypeptide is Cytoplasmic tRNA 2-thiolation protein 2 (Drosophila willistoni (Fruit fly)).